A 1036-amino-acid chain; its full sequence is MRNTTKLVVHVVDAQYLMPRDGQGSASPFVEVDFLNQLSKTRTVPKSLNPVWNQKLYFDYDQSVINQHNQHIEVSVYHERRPIPGRSFLGRVKISLCNIVYKDDQVYQRFTLEKKWLLSSVKGEIGLKFYISSSEEDQTFPLPSKPYTSPTQASASGTEEDTADSETEDSLKSFASAEEEDLADSVSECVEGKKSEEVKEPVQKLHRQEVFARPAPMQSIRLRSRENPHEAQKPMSRGANQLHPQNPNHLQSYGDTDLDDFKVKDMNLDLGERWPNPNAGERFTGTYDLVEQMFYLYVRVVKAKELPPGSITGGCDPYVEVKLGNYKGRTKIFDRKTTIPEWNQVFAFTKERIQSSVLEVFVKDKETLGRDDILGKVVFDLNEIPTRVPPNSPLAPQWYRLEDWRGEGKVVRGEIMLAVWMGTQADEAFPEAWHADSASVHGEGVFNIRSKVYVSPKLWYLRVNVIEAQDMIPSDRNRLPDVFVKASVGMQTLKTSICSIKTTNPLWKEDLVFVVAEPFEEQLVISVEDRVHTSKDEVIGKITLPMNVFEKRLDHRPVHSRWFNLDKYGTGVLEPDARRKEHKFSSRIHLRICLEGGYHVMDESTMYISDTRPTARQLWKQPVGMLEIGILGANGLVPMKLKDGRGSTNAYCVAKYGQKWVRTRTILDTLSPRWNEQYTWEVYDPCTVITLGVFDNSHLGSAQSGTADSRDARIGKVRIRLSTLEAHKIYTHSFPLLVLQPHGLKKTGDLQISVRFTTLSLANIIYNYGHPLLPKMHYLFPFTVNQVDGLRYQAMNIVSTRLGRAEPPLRKEVVEYMLDVDSHLWSMRRSKANFFRIMSLLSGYFLVGKWLEDVCNWRYPVTSVLVNVLFFILVMYPELILPTMFLYMFFIGLWNFRSRPRHPPHMDMKLSWAEAVGPDELDEEFDTFPTSRSQELVRLRYDRLRSVAGRIQTVVGDIAAQGERIQSLLSWRDPRATSLFILFCLAASVVLYAMPFKAIALASGLYYLRHPKFRSKLPSLPSNFFKRLPSSTDSLL.

Positions 1 to 110 (MRNTTKLVVH…YKDDQVYQRF (110 aa)) constitute a C2 1 domain. Disordered regions lie at residues 137–204 (DQTF…PVQK) and 225–246 (RENPHEAQKPMSRGANQLHPQN). Residues 146–155 (PYTSPTQASA) are compositionally biased toward polar residues. The segment covering 158 to 168 (TEEDTADSETE) has biased composition (acidic residues). Basic and acidic residues predominate over residues 190 to 204 (VEGKKSEEVKEPVQK). 3 C2 domains span residues 277–399 (PNAG…PQWY), 440–563 (VHGE…SRWF), and 607–734 (YISD…THSF). Positions 316, 364, 366, and 372 each coordinate Ca(2+). 2 helical membrane-spanning segments follow: residues 871–891 (FILVMYPELILPTMFLYMFFI) and 979–999 (LFILFCLAASVVLYAMPFKAI).

Belongs to the MCTP family. Requires Ca(2+) as cofactor. Expressed in the vascular tissues of roots and rosette leaves. Accumulates in roots meristems. Observed in flowers.

Its subcellular location is the cell membrane. Functionally, may function as a signaling molecule by regulating the trafficking of other regulators. The protein is Multiple C2 domain and transmembrane region protein 2 of Arabidopsis thaliana (Mouse-ear cress).